Reading from the N-terminus, the 136-residue chain is Large ribosomal subunit protein uL16c (136 aa).

The interval 1 to 20 (MLSPKRTRFRKQHRGRMKGK) is disordered.

It belongs to the universal ribosomal protein uL16 family. Part of the 50S ribosomal subunit.

Its subcellular location is the plastid. The protein localises to the chloroplast. The sequence is that of Large ribosomal subunit protein uL16c from Triticum aestivum (Wheat).